Reading from the N-terminus, the 396-residue chain is MSAEMTDLNFAEGRPLMGEKEDDITVLLQEYVTQEHDIETAHGIVHVTMCGTPKLNRPVILTYHDIGLNHKTCFNSLFNFEDMHEITQHFSVCHVDAPGQQEGAASFPAGYMYPSMDQLAEMLPGVVQQLGLKSIIGLGIGSGAYILTRFALNHPSMVEGLVLININPCAEGWMDWAATKISGWAHALPEMVISHLFSKDEVHSNPELVETYRQHILHDINQNNLQLFVKSYNSRRDLEIERPIPGSNTVTLKCPSLLVVGDSSPAVDAVVECNSKLDPTKTTLLKMSDCGGFPQVVQPAKLAEAFKYFVQGMGYMPAASMTRLMRSRTGSAASSSSQDGNRSRSHTNEGSRSRSQTGDGNRSRAHTGDGNRSRSHTDTNNVNSDHNTPKSMEVSC.

Residues 326-396 (RSRTGSAASS…NTPKSMEVSC (71 aa)) form a disordered region. Over residues 327–340 (SRTGSAASSSSQDG) the composition is skewed to low complexity. 4 repeat units span residues 340 to 349 (GNRSRSHTNE), 350 to 359 (GSRSRSQTGD), 360 to 369 (GNRSRAHTGD), and 370 to 379 (GNRSRSHTDT). The tract at residues 340 to 379 (GNRSRSHTNEGSRSRSQTGDGNRSRAHTGDGNRSRSHTDT) is 4 X 10 AA tandem repeats of G-[NS]-R-S-R-[AS]-[HQ]-T-[DGN]-[DET]. Residues 366 to 377 (HTGDGNRSRSHT) are compositionally biased toward basic and acidic residues. A compositionally biased stretch (polar residues) spans 378–390 (DTNNVNSDHNTPK).

The protein belongs to the NDRG family.

In terms of biological role, may be involved in pronephros development, after specification of the pronephros. The sequence is that of Protein NDRG1-B (ndrg1-b) from Xenopus laevis (African clawed frog).